Here is a 462-residue protein sequence, read N- to C-terminus: UDP-N-acetylmuramoylalanine--D-glutamate ligase (462 aa).

120–126 is a binding site for ATP; that stretch reads GTNGKTT.

This sequence belongs to the MurCDEF family.

The protein resides in the cytoplasm. It carries out the reaction UDP-N-acetyl-alpha-D-muramoyl-L-alanine + D-glutamate + ATP = UDP-N-acetyl-alpha-D-muramoyl-L-alanyl-D-glutamate + ADP + phosphate + H(+). It participates in cell wall biogenesis; peptidoglycan biosynthesis. In terms of biological role, cell wall formation. Catalyzes the addition of glutamate to the nucleotide precursor UDP-N-acetylmuramoyl-L-alanine (UMA). This is UDP-N-acetylmuramoylalanine--D-glutamate ligase from Bdellovibrio bacteriovorus (strain ATCC 15356 / DSM 50701 / NCIMB 9529 / HD100).